The following is a 420-amino-acid chain: Pre-mRNA-splicing factor RBM22 (420 aa).

At A2 the chain carries N-acetylalanine. Phosphoserine occurs at positions 4 and 102. Glycyl lysine isopeptide (Lys-Gly) (interchain with G-Cter in SUMO2) cross-links involve residues K139 and K149. The segment at 159–186 (RNRPHICSFWVKGECKRGEECPYRHEKP) adopts a C3H1-type zinc-finger fold. K212 bears the N6-acetyllysine mark. The RRM domain occupies 232 to 305 (TTLYVGGLGD…RRLNVKWGRS (74 aa)). A Glycyl lysine isopeptide (Lys-Gly) (interchain with G-Cter in SUMO2) cross-link involves residue K290. 2 disordered regions span residues 303–343 (GRSQ…AAEE) and 372–420 (APPP…HSSP). Basic and acidic residues predominate over residues 309–318 (RGKEKEKDGT).

This sequence belongs to the SLT11 family. As to quaternary structure, component of the pre-catalytic and catalytic spliceosome complexes. Component of the postcatalytic spliceosome P complex. Interacts with PDCD6; the interaction induces translocation of PDCD6 in the cytoplasm. Interacts with PPIL1.

The protein resides in the nucleus. Its subcellular location is the cytoplasm. In terms of biological role, required for pre-mRNA splicing as component of the activated spliceosome. Involved in the first step of pre-mRNA splicing. Binds directly to the internal stem-loop (ISL) domain of the U6 snRNA and to the pre-mRNA intron near the 5' splice site during the activation and catalytic phases of the spliceosome cycle. Involved in both translocations of the nuclear SLU7 to the cytoplasm and the cytosolic calcium-binding protein PDCD6 to the nucleus upon cellular stress responses. This is Pre-mRNA-splicing factor RBM22 (RBM22) from Homo sapiens (Human).